The sequence spans 526 residues: Lycopene epsilon cyclase, chloroplastic (526 aa).

108–136 (LVVIGCGPAGLALAAESAKLGLNVGLVGP) lines the NAD(+) pocket. The next 2 helical transmembrane spans lie at 443 to 463 (FFLF…RSFF) and 477 to 497 (FLGS…MFII).

The protein belongs to the lycopene cyclase family.

Its subcellular location is the plastid. The protein localises to the chloroplast membrane. The catalysed reaction is a carotenoid psi-end group = a carotenoid epsilon-end group. Its pathway is carotenoid biosynthesis; alpha-zeacarotene biosynthesis. It functions in the pathway carotenoid biosynthesis; delta-carotene biosynthesis. Its function is as follows. Catalyzes the single cyclization reaction which converts lycopene to delta-carotene and neurosporene to alpha-zeacarotene. Required for lutein biosynthesis. The sequence is that of Lycopene epsilon cyclase, chloroplastic from Solanum lycopersicum (Tomato).